Consider the following 395-residue polypeptide: Chorismate synthase (395 aa).

Belongs to the chorismate synthase family. In terms of assembly, homotetramer. Requires FMNH2 as cofactor.

It carries out the reaction 5-O-(1-carboxyvinyl)-3-phosphoshikimate = chorismate + phosphate. The protein operates within metabolic intermediate biosynthesis; chorismate biosynthesis; chorismate from D-erythrose 4-phosphate and phosphoenolpyruvate: step 7/7. This is Chorismate synthase from Schizosaccharomyces pombe (strain 972 / ATCC 24843) (Fission yeast).